The following is a 519-amino-acid chain: Ribonuclease Y (519 aa).

A helical transmembrane segment spans residues Pro3–Val23. Residues Thr209–Leu272 form the KH domain. Residues Val335–Ala428 enclose the HD domain.

It belongs to the RNase Y family.

It is found in the cell membrane. Endoribonuclease that initiates mRNA decay. The chain is Ribonuclease Y from Bacillus licheniformis (strain ATCC 14580 / DSM 13 / JCM 2505 / CCUG 7422 / NBRC 12200 / NCIMB 9375 / NCTC 10341 / NRRL NRS-1264 / Gibson 46).